Here is a 1293-residue protein sequence, read N- to C-terminus: Enterobactin synthase component F (1293 aa).

The interval 1–301 (MSQHLPLVAA…NVLPLGIHIA (301 aa)) is elongation/condensation. Positions 482-887 (SYREMREQVV…ALPDVEQAVT (406 aa)) are adenylation. Positions 971 to 1046 (APKAGSETII…KLATIIDGEE (76 aa)) constitute a Carrier domain. S1006 is modified (O-(pantetheine 4'-phosphoryl)serine). The segment at 1066–1293 (PTLFCFHPAS…GPIIRATLNR (228 aa)) is thioesterase. H1271 (proton acceptor; for thioesterase activity) is an active-site residue.

This sequence belongs to the ATP-dependent AMP-binding enzyme family. EntF subfamily. As to quaternary structure, proteins EntB, EntD, EntE and EntF are the component of the enterobactin synthase. Components probably do not form a stable complex. EntF acts as a catalytic monomer. Pantetheine 4'-phosphate serves as cofactor. 4'-phosphopantetheine is transferred from CoA to a specific serine of apo-EntF by EntD. Holo-EntF so formed is then acylated with seryl-AMP.

The protein resides in the cytoplasm. It carries out the reaction 3 2,3-dihydroxybenzoate + 3 L-serine + 6 ATP = enterobactin + 6 AMP + 6 diphosphate + 4 H(+). The enzyme catalyses holo-[peptidyl-carrier protein] + L-serine + ATP = L-seryl-[peptidyl-carrier protein] + AMP + diphosphate. It functions in the pathway siderophore biosynthesis; enterobactin biosynthesis. Functionally, involved in the biosynthesis of the siderophore enterobactin (enterochelin), which is a macrocyclic trimeric lactone of N-(2,3-dihydroxybenzoyl)-serine. EntF catalyzes the activation of L-serine via ATP-dependent PPi exchange reaction to form seryladenylate. Activated L-serine is loaded onto the peptidyl carrier domain via a thioester linkage to the phosphopanthetheine moiety, forming seryl-S-Ppant-EntF. EntF acts then as the sole catalyst for the formation of the three amide and three ester linkages found in enterobactin, using seryladenylate and 2,3-dihydroxybenzoate-S-Ppant-EntB (DHB-S-Ppant-EntB) as substrates, via the formation of a DHB-Ser-S-Ppant-EntF intermediate. In Escherichia coli O157:H7, this protein is Enterobactin synthase component F (entF).